Reading from the N-terminus, the 48-residue chain is MTRRTLEGTSRKRRRVSGFRTRMRTINGRKVIQARRQKGRHKLSVSEG.

The protein belongs to the bacterial ribosomal protein bL34 family.

This Gloeothece citriformis (strain PCC 7424) (Cyanothece sp. (strain PCC 7424)) protein is Large ribosomal subunit protein bL34.